The primary structure comprises 363 residues: tRNA N6-adenosine threonylcarbamoyltransferase (363 aa).

Residues His-117 and His-121 each contribute to the Fe cation site. Residues 139-143 (LVSGG), Asp-172, Gly-185, and Asn-287 each bind substrate. Asp-315 lines the Fe cation pocket.

The protein belongs to the KAE1 / TsaD family. Fe(2+) is required as a cofactor.

The protein localises to the cytoplasm. The catalysed reaction is L-threonylcarbamoyladenylate + adenosine(37) in tRNA = N(6)-L-threonylcarbamoyladenosine(37) in tRNA + AMP + H(+). Required for the formation of a threonylcarbamoyl group on adenosine at position 37 (t(6)A37) in tRNAs that read codons beginning with adenine. Is involved in the transfer of the threonylcarbamoyl moiety of threonylcarbamoyl-AMP (TC-AMP) to the N6 group of A37, together with TsaE and TsaB. TsaD likely plays a direct catalytic role in this reaction. This Cereibacter sphaeroides (strain ATCC 17025 / ATH 2.4.3) (Rhodobacter sphaeroides) protein is tRNA N6-adenosine threonylcarbamoyltransferase.